The chain runs to 114 residues: MESTAHLRFLRMSPRKISTVAELIRGKPVEAALNILKFTKRAAAKPVEKLIKSAVANATDKSKGQVDVDTLYVKTISVDQGPTQRRFMPRAMGRATPIKKKTAHVHVVLAEAKK.

It belongs to the universal ribosomal protein uL22 family. As to quaternary structure, part of the 50S ribosomal subunit.

This protein binds specifically to 23S rRNA; its binding is stimulated by other ribosomal proteins, e.g. L4, L17, and L20. It is important during the early stages of 50S assembly. It makes multiple contacts with different domains of the 23S rRNA in the assembled 50S subunit and ribosome. Functionally, the globular domain of the protein is located near the polypeptide exit tunnel on the outside of the subunit, while an extended beta-hairpin is found that lines the wall of the exit tunnel in the center of the 70S ribosome. The protein is Large ribosomal subunit protein uL22 of Myxococcus xanthus (strain DK1622).